A 38-amino-acid polypeptide reads, in one-letter code: Photosystem II reaction center protein L (38 aa).

Residues 17 to 37 (SLYWGLLLIFVLAVSFSNYFF) traverse the membrane as a helical segment.

Belongs to the PsbL family. As to quaternary structure, PSII is composed of 1 copy each of membrane proteins PsbA, PsbB, PsbC, PsbD, PsbE, PsbF, PsbH, PsbI, PsbJ, PsbK, PsbL, PsbM, PsbT, PsbX, PsbY, PsbZ, Psb30/Ycf12, at least 3 peripheral proteins of the oxygen-evolving complex and a large number of cofactors. It forms dimeric complexes.

It localises to the plastid. The protein resides in the chloroplast thylakoid membrane. Functionally, one of the components of the core complex of photosystem II (PSII). PSII is a light-driven water:plastoquinone oxidoreductase that uses light energy to abstract electrons from H(2)O, generating O(2) and a proton gradient subsequently used for ATP formation. It consists of a core antenna complex that captures photons, and an electron transfer chain that converts photonic excitation into a charge separation. This subunit is found at the monomer-monomer interface and is required for correct PSII assembly and/or dimerization. In Amborella trichopoda, this protein is Photosystem II reaction center protein L.